Consider the following 154-residue polypeptide: Ascorbate-specific PTS system EIIA component (154 aa).

Residues 6-150 (SLAENKSIRL…QEVLDLIDRT (145 aa)) enclose the PTS EIIA type-2 domain. Histidine 68 (tele-phosphohistidine intermediate) is an active-site residue. A Phosphohistidine modification is found at histidine 68.

It is found in the cytoplasm. Its function is as follows. The phosphoenolpyruvate-dependent sugar phosphotransferase system (sugar PTS), a major carbohydrate active transport system, catalyzes the phosphorylation of incoming sugar substrates concomitantly with their translocation across the cell membrane. The enzyme II UlaABC PTS system is involved in ascorbate transport. This Escherichia coli O157:H7 protein is Ascorbate-specific PTS system EIIA component (ulaC).